We begin with the raw amino-acid sequence, 184 residues long: NADH-quinone oxidoreductase subunit B (184 aa).

Cys63, Cys64, Cys128, and Cys158 together coordinate [4Fe-4S] cluster.

It belongs to the complex I 20 kDa subunit family. As to quaternary structure, NDH-1 is composed of 14 different subunits. Subunits NuoB, C, D, E, F, and G constitute the peripheral sector of the complex. Requires [4Fe-4S] cluster as cofactor.

It localises to the cell inner membrane. The catalysed reaction is a quinone + NADH + 5 H(+)(in) = a quinol + NAD(+) + 4 H(+)(out). NDH-1 shuttles electrons from NADH, via FMN and iron-sulfur (Fe-S) centers, to quinones in the respiratory chain. The immediate electron acceptor for the enzyme in this species is believed to be ubiquinone. Couples the redox reaction to proton translocation (for every two electrons transferred, four hydrogen ions are translocated across the cytoplasmic membrane), and thus conserves the redox energy in a proton gradient. This chain is NADH-quinone oxidoreductase subunit B, found in Xylella fastidiosa (strain M23).